The following is a 118-amino-acid chain: Small ribosomal subunit protein uS13 (118 aa).

Positions 94–118 are disordered; the sequence is GLPLRGQRTRTNARTRKGPRKAIRK.

It belongs to the universal ribosomal protein uS13 family. As to quaternary structure, part of the 30S ribosomal subunit. Forms a loose heterodimer with protein S19. Forms two bridges to the 50S subunit in the 70S ribosome.

Its function is as follows. Located at the top of the head of the 30S subunit, it contacts several helices of the 16S rRNA. In the 70S ribosome it contacts the 23S rRNA (bridge B1a) and protein L5 of the 50S subunit (bridge B1b), connecting the 2 subunits; these bridges are implicated in subunit movement. Contacts the tRNAs in the A and P-sites. The chain is Small ribosomal subunit protein uS13 from Xanthomonas axonopodis pv. citri (strain 306).